Consider the following 42-residue polypeptide: Photosystem I reaction center subunit IX (42 aa).

Residues 7–27 (YLSTAPVLATLWFGFLAGLLI) form a helical membrane-spanning segment.

This sequence belongs to the PsaJ family.

The protein resides in the plastid. It is found in the chloroplast thylakoid membrane. May help in the organization of the PsaE and PsaF subunits. This Anthoceros angustus (Hornwort) protein is Photosystem I reaction center subunit IX.